Consider the following 272-residue polypeptide: Hydroxyethylthiazole kinase (272 aa).

Met44 lines the substrate pocket. Residues Lys119 and Thr172 each coordinate ATP. Residue Gly199 coordinates substrate.

Belongs to the Thz kinase family. Mg(2+) is required as a cofactor.

The catalysed reaction is 5-(2-hydroxyethyl)-4-methylthiazole + ATP = 4-methyl-5-(2-phosphooxyethyl)-thiazole + ADP + H(+). The protein operates within cofactor biosynthesis; thiamine diphosphate biosynthesis; 4-methyl-5-(2-phosphoethyl)-thiazole from 5-(2-hydroxyethyl)-4-methylthiazole: step 1/1. Its function is as follows. Catalyzes the phosphorylation of the hydroxyl group of 4-methyl-5-beta-hydroxyethylthiazole (THZ). This is Hydroxyethylthiazole kinase from Enterococcus faecalis (strain ATCC 700802 / V583).